The chain runs to 297 residues: MKLSKAVWALVLTVVTWASAFPAIRVGLDGYGVAGLSLSRLTVASVALAIAAGPLGVRRPRARDLPMIALCGATGMSAYQVLLNWGEVHVPAGTASLLIAIAPVFSVLLAAVFLGERMTWAQIAGSAVAISGAAVIAVAGGHARYTTSAWVVLAAAVVQGVYHFATKPLLARYTGLEVACYAMWAGTVFLLPLLPAMVHGFATAPVAATASTVYLGLLPSAIGFVSWGYAVARLSVASSTASLYLVPPVALVVAFVWLGEVPPPLALVGGALGIAGVMLINRRTLGRRREASTPGRR.

The next 9 membrane-spanning stretches (helical) occupy residues 6 to 26 (AVWALVLTVVTWASAFPAIRV), 32 to 52 (GVAGLSLSRLTVASVALAIAA), 65 to 85 (LPMIALCGATGMSAYQVLLNW), 95 to 115 (ASLLIAIAPVFSVLLAAVFLG), 123 to 143 (IAGSAVAISGAAVIAVAGGHA), 150 to 170 (WVVLAAAVVQGVYHFATKPLL), 178 to 198 (VACYAMWAGTVFLLPLLPAMV), 212 to 232 (TVYLGLLPSAIGFVSWGYAVA), and 249 to 269 (VALVVAFVWLGEVPPPLALVG). 2 EamA domains span residues 6-137 (AVWA…AVIA) and 150-281 (WVVL…MLIN).

The protein belongs to the EamA transporter family.

The protein localises to the cell membrane. Functionally, probably involved in the export of terminal alkyne-containing amino acids, namely L-propargylglycine (Pra) and L-beta-ethynylserine, that are antibiotics synthesized by enzymes encoded in the same gene cluster. This is Probable terminal-alkyne amino-acid exporter from Streptantibioticus cattleyicolor (strain ATCC 35852 / DSM 46488 / JCM 4925 / NBRC 14057 / NRRL 8057) (Streptomyces cattleya).